Here is a 292-residue protein sequence, read N- to C-terminus: NAD kinase (292 aa).

The active-site Proton acceptor is the D72. NAD(+) contacts are provided by residues 72–73, 146–147, H157, R174, D176, and 187–192; these read DG, NE, and TAYSLS.

Belongs to the NAD kinase family. Requires a divalent metal cation as cofactor.

It localises to the cytoplasm. The enzyme catalyses NAD(+) + ATP = ADP + NADP(+) + H(+). Its function is as follows. Involved in the regulation of the intracellular balance of NAD and NADP, and is a key enzyme in the biosynthesis of NADP. Catalyzes specifically the phosphorylation on 2'-hydroxyl of the adenosine moiety of NAD to yield NADP. The chain is NAD kinase from Shewanella loihica (strain ATCC BAA-1088 / PV-4).